The sequence spans 1700 residues: Probable serine/threonine-protein kinase ifkC (1700 aa).

The interval 1–25 is disordered; that stretch reads MPPKPKQKAKQPSQQPPPPPPPAAA. Residues 14–23 are compositionally biased toward pro residues; that stretch reads QQPPPPPPPA. The 124-residue stretch at 74 to 197 folds into the RWD domain; it reads MELEALQAIF…EIAKDFLNEN (124 aa). Positions 454–463 are enriched in polar residues; the sequence is GLKKSPSTFE. Positions 454 to 488 are disordered; that stretch reads GLKKSPSTFEYSGEGGGGGVGGGSSQKTINPHQQS. Residues 466–477 show a composition bias toward gly residues; sequence GEGGGGGVGGGS. Residues 479–488 show a composition bias toward polar residues; the sequence is QKTINPHQQS. The Protein kinase domain maps to 494 to 1027; that stretch reads FEEIQLLGRG…AQQLLQSELM (534 aa). ATP-binding positions include 500 to 508 and K523; that span reads LGRGGFGQV. Disordered stretches follow at residues 568 to 639 and 689 to 760; these read LTND…ENND and GNNT…SSSK. A compositionally biased stretch (acidic residues) spans 572-639; the sequence is NSDDDDDDDD…SEFESEENND (68 aa). Over residues 697 to 735 the composition is skewed to low complexity; sequence SSNQHLQQQQQQNQSQQQKKQPQQNQSQQQKKLKNSNSK. Over residues 736–752 the composition is skewed to basic residues; sequence SKSKSKSKSKSKSKSNS. D822 (proton acceptor) is an active-site residue. Low complexity-rich tracts occupy residues 850–875, 1135–1158, 1230–1240, and 1509–1531; these read TSTLSPTTNINSSTSSAGSLTTSSNS, NNSSSSSSTTTTTSTTNTANNTNS, SSNGNSNNNNS, and NNSNNSSSSSSSSSSNNNNSYNN. Disordered stretches follow at residues 850 to 901, 1134 to 1160, 1216 to 1253, and 1507 to 1531; these read TSTL…EVEG, FNNSSSSSSTTTTTSTTNTANNTNSVV, KHHHQQQNDVRHDNSSNGNSNNNNSNDRHHDQDKSNTT, and NLNNSNNSSSSSSSSSSNNNNSYNN.

The protein belongs to the protein kinase superfamily. Ser/Thr protein kinase family. GCN2 subfamily.

The enzyme catalyses L-seryl-[protein] + ATP = O-phospho-L-seryl-[protein] + ADP + H(+). It carries out the reaction L-threonyl-[protein] + ATP = O-phospho-L-threonyl-[protein] + ADP + H(+). The polypeptide is Probable serine/threonine-protein kinase ifkC (ifkC) (Dictyostelium discoideum (Social amoeba)).